We begin with the raw amino-acid sequence, 620 residues long: MALLQIAEPGQSAAPHQHRLAVGIDLGTTNSLVAAVRSGVANTLPDDKSHHSLPSVVRYTQEGVEVGVDAEANSAKDPQNTIISVKRFMGRSLSDIRSGVQDLPYQLETSENGLPVFVTEQGKVNPIQVSAEILKPLVSRAEKTLGGELEGVVITVPAYFDDAQRQGTKDAAGLLGVKVLRLLNEPTAAAIAYGLDSGQEGVIAIYDLGGGTFDISILRLHKGVFEVLATGGDSALGGDDFDHLLYQHLLNQWQLASPSATLSRRLLIESRRVKEALTDNIQVTASIKLDDGTELTHDVAKATFDDLISSLVKKTVSSCRRALRDAGVTNDEVLETVMVGGSTRVPLVRELVDKFFGKEPLTSIDPDRVVAIGAAIQADILVGNKPESDLLLLDVLPLSLGIETMGGLVEKIVSRNTTIPVAKAQEFTTFKDGQTAMAFHVVQGERELVDDCRSLARFTLKGIPPLAAGAAHIRVTFQVDADGLLSVTAMEKSTGVQSSIQVKPSFGLTDEEIGTMLKDSMANAKEDITRRMLAEQKVEAARVLETLSAALQKDAVLLTESERSDIEQAMASLAQISSQDDADAIEKAIEALDASTQDFAAKRMDNSIKLALKGQSVDSI.

It belongs to the heat shock protein 70 family.

Chaperone involved in the maturation of iron-sulfur cluster-containing proteins. Has a low intrinsic ATPase activity which is markedly stimulated by HscB. In Shewanella woodyi (strain ATCC 51908 / MS32), this protein is Chaperone protein HscA homolog.